The chain runs to 258 residues: Casein kinase II subunit beta' (258 aa).

The segment covering 1 to 10 (MGSRSENVGT) has biased composition (polar residues). Residues 1–29 (MGSRSENVGTVTREGSRVEQDDVLMDDDS) are disordered.

It belongs to the casein kinase 2 subunit beta family. As to quaternary structure, tetramer composed of an alpha subunit, an alpha' subunit, one beta subunit and one beta' subunit. Interacts with FACT subunits POB3 and SPT16. Interaction with YTA7. In terms of processing, phosphorylated by alpha subunit. Post-translationally, the N-terminus is blocked.

Regulatory subunit of casein kinase II/CK2. As part of the kinase complex regulates the basal catalytic activity of the alpha subunit a constitutively active serine/threonine-protein kinase that phosphorylates a large number of substrates containing acidic residues C-terminal to the phosphorylated serine or threonine. This is Casein kinase II subunit beta' from Saccharomyces cerevisiae (strain ATCC 204508 / S288c) (Baker's yeast).